The primary structure comprises 192 residues: GTP cyclohydrolase-2 (192 aa).

47-51 (RIHSE) contributes to the GTP binding site. Residues Cys52, Cys63, and Cys65 each contribute to the Zn(2+) site. GTP is bound by residues Gln68, 90 to 92 (EGR), and Thr112. The active-site Proton acceptor is the Asp124. Arg126 (nucleophile) is an active-site residue. Residues Thr147 and Lys152 each contribute to the GTP site.

This sequence belongs to the GTP cyclohydrolase II family. It depends on Zn(2+) as a cofactor.

The catalysed reaction is GTP + 4 H2O = 2,5-diamino-6-hydroxy-4-(5-phosphoribosylamino)-pyrimidine + formate + 2 phosphate + 3 H(+). It functions in the pathway cofactor biosynthesis; riboflavin biosynthesis; 5-amino-6-(D-ribitylamino)uracil from GTP: step 1/4. In terms of biological role, catalyzes the conversion of GTP to 2,5-diamino-6-ribosylamino-4(3H)-pyrimidinone 5'-phosphate (DARP), formate and pyrophosphate. The sequence is that of GTP cyclohydrolase-2 from Picrophilus torridus (strain ATCC 700027 / DSM 9790 / JCM 10055 / NBRC 100828 / KAW 2/3).